A 77-amino-acid chain; its full sequence is DNA-directed RNA polymerase subunit epsilon (77 aa).

Belongs to the RNA polymerase subunit epsilon family. As to quaternary structure, RNAP is composed of a core of 2 alpha, a beta and a beta' subunit. The core is associated with a delta subunit, and at least one of epsilon or omega. When a sigma factor is associated with the core the holoenzyme is formed, which can initiate transcription.

The catalysed reaction is RNA(n) + a ribonucleoside 5'-triphosphate = RNA(n+1) + diphosphate. A non-essential component of RNA polymerase (RNAP). The polypeptide is DNA-directed RNA polymerase subunit epsilon (Lactobacillus delbrueckii subsp. bulgaricus (strain ATCC 11842 / DSM 20081 / BCRC 10696 / JCM 1002 / NBRC 13953 / NCIMB 11778 / NCTC 12712 / WDCM 00102 / Lb 14)).